A 366-amino-acid polypeptide reads, in one-letter code: Putative amino-acid transporter MJ1196 (366 aa).

11 helical membrane passes run 14 to 34, 37 to 57, 87 to 107, 111 to 131, 141 to 161, 173 to 193, 205 to 225, 247 to 267, 291 to 311, 314 to 334, and 346 to 366; these read ITSI…LLFG, IIWG…PFAY, ILWL…EIVF, FNVS…ILGG, IFGI…GIKI, ILTI…TMPL, GLLV…LTIV, FLLA…LFTL, IPYY…IFDA, LVDM…LAVF, and LISM…FIIL.

This sequence belongs to the amino acid-polyamine-organocation (APC) superfamily.

The protein localises to the cell membrane. This chain is Putative amino-acid transporter MJ1196, found in Methanocaldococcus jannaschii (strain ATCC 43067 / DSM 2661 / JAL-1 / JCM 10045 / NBRC 100440) (Methanococcus jannaschii).